Consider the following 1070-residue polypeptide: MEGKKKRPLFFLLVLLLSHKANNVLFERMNGILLLECENEYVKNENGYKLATGHHYMDNDQIERWLQGTDRSRRVKIEENVKYKYNVEELNTKYEQMKGKRINRILKESTYEAQNVADNNYIDDKANGEYKTDNKTNKGEGARNMVMLDYDISGSGQPDGIIDNVVELLTEDEGNFLKNSSKGDDHPYRMKRKEKMSSGAINQIFLQNNVMDKCNDKRKRGERDWDCPTEKDVCIPDRRYQLCMMEITNLVDTDTHFHSDIIFRKSYSRRRLIYDVGGRGDLLLKKYNNVYSEDLCKDIKWSLQDFGDIIMGTDMEGIGYSLVVQNNLRSIFGTGTSAELDRKKWWNDHKKDIWKAMILSVKEKNRYSAWNCKEDVQIKVEPQIYRWIREWGRDYMSEFREQRRKLNEKCEDKLYYSTMLICTLPPCNNACKSYDEWITGKKKQWDVLSTKFSSVKKAQKIETENIARAYDILKQELNGFNEVTFENEINKRDKLYNYFCVCIVQEARKNTQENVKNVGSGVESKAPSSNPINEAVKSSSGEGKVQEDSAHRSVNEGEGKSSTNEADPGSQPGGPASRSVDEKAGVPALSAGQGHDKVPPAEAAATESAVPHSADKTPITATEENKQRTQVDGVAGGDGKAPGPTVSSDVPSVGGKDSGPSTPASHLAGENGEVHNGTDTEPKEDGEKADPQKNIEVKGKQDTDDRSQGSLGPHTDERASLGETHMEKDTETTGGSTLTPEQNVSVASDNGNVPGSGNKQNEGATALSGAESLESSESVHKTIDNTTHGLENKNGGNEKDFQKHDFMNNDMLNDQTSSDHTSSDQTSSDQTSSDQTSSDQTSSDQTSSDQTSSDQTSSDQTIDTEGHHRDNVRNPEIKSSEDMSKGDFMRNSNSNELYSHNNLNNRKLNRDQYEHRDVKATREKIILMSEVNKCNNRTSLKYCNTIEDRMLSSTCSRERSKNLCCSISDFCLNYFELYSYEFYNCMKKEFEDPSYECFTKGSSTGIVYFATGGAFLIILLLFASWNAASNDYEEEATFDEFEEYCYNIHRTPQMPNDIEHMQQFTPLDYS.

The first 21 residues, 1 to 21 (MEGKKKRPLFFLLVLLLSHKA), serve as a signal peptide directing secretion. The Extracellular portion of the chain corresponds to 22 to 1003 (NNVLFERMNG…SYECFTKGSS (982 aa)). Asparagine 134 and asparagine 179 each carry an N-linked (GlcNAc...) asparagine glycan. Intrachain disulfides connect cysteine 214–cysteine 243 and cysteine 227–cysteine 234. A Cell attachment site motif is present at residues 279–281 (RGD). 4 disulfide bridges follow: cysteine 296/cysteine 372, cysteine 410/cysteine 427, cysteine 422/cysteine 502, and cysteine 431/cysteine 500. The disordered stretch occupies residues 518–912 (VGSGVESKAP…LNNRKLNRDQ (395 aa)). Positions 526–541 (APSSNPINEAVKSSSG) are enriched in polar residues. Basic and acidic residues-rich tracts occupy residues 544–559 (KVQE…EGEG), 672–707 (GEVH…DDRS), and 714–731 (HTDE…KDTE). N-linked (GlcNAc...) asparagine glycosylation occurs at asparagine 676. Over residues 732–763 (TTGGSTLTPEQNVSVASDNGNVPGSGNKQNEG) the composition is skewed to polar residues. N-linked (GlcNAc...) asparagine glycosylation occurs at asparagine 743. The span at 766 to 776 (ALSGAESLESS) shows a compositional bias: low complexity. N-linked (GlcNAc...) asparagine glycosylation occurs at asparagine 785. Positions 796–807 (GNEKDFQKHDFM) are enriched in basic and acidic residues. The segment covering 814–863 (DQTSSDHTSSDQTSSDQTSSDQTSSDQTSSDQTSSDQTSSDQTSSDQTID) has biased composition (low complexity). Residues 864-888 (TEGHHRDNVRNPEIKSSEDMSKGDF) are compositionally biased toward basic and acidic residues. Over residues 890 to 906 (RNSNSNELYSHNNLNNR) the composition is skewed to polar residues. Asparagine 936 carries an N-linked (GlcNAc...) asparagine glycan. Residues 1004 to 1025 (TGIVYFATGGAFLIILLLFASW) traverse the membrane as a helical segment. Residues 1026–1070 (NAASNDYEEEATFDEFEEYCYNIHRTPQMPNDIEHMQQFTPLDYS) lie on the Cytoplasmic side of the membrane.

Its subcellular location is the membrane. Binds to Neu5Gc-sialylated receptors on macaque erythrocytes. The protein is Duffy receptor gamma form of Plasmodium knowlesi.